A 103-amino-acid polypeptide reads, in one-letter code: MSRVCDITGASKSFGNKVSHSNRKTKRSYLVNLHNVTLVSEVLGRKFRVKVASRTLRTIDYKGGLDLYLLNTSSRKLTEVARKIKRKIKVAIATGKSKQSDNI.

This sequence belongs to the bacterial ribosomal protein bL28 family.

The protein is Large ribosomal subunit protein bL28 of Anaplasma phagocytophilum (strain HZ).